A 280-amino-acid polypeptide reads, in one-letter code: Thioredoxin-related transmembrane protein 1 (280 aa).

Positions 1–26 are cleaved as a signal peptide; the sequence is MAPSGSLAVPLAVLVLLLWGAPWTHG. The Thioredoxin domain occupies 27–132; sequence RRSNVRVITD…FINFISDKEW (106 aa). Residues 27 to 180 lie on the Extracellular side of the membrane; the sequence is RRSNVRVITD…EDLGLPVWGS (154 aa). Active-site nucleophile residues include C56 and C59. Cysteines 56 and 59 form a disulfide. The helical transmembrane segment at 181–203 threads the bilayer; the sequence is YTVFALATLFSGLLLGLCMIFVA. Topologically, residues 204-280 are cytoplasmic; that stretch reads DCLCPSKRRR…LGPSLATDKS (77 aa). Residues C205 and C207 are each lipidated (S-palmitoyl cysteine). A disordered region spans residues 218 to 280; the sequence is PYPSKKLLSE…LGPSLATDKS (63 aa). Phosphoserine is present on residues S228, S247, S270, S274, and S280. Acidic residues predominate over residues 237 to 252; that stretch reads EEQEADEEDVSEEEAE.

Interacts with ATP2A2. In terms of processing, palmitoylated; palmitoylation is required for localization to mitochondria-associated endoplasmic reticulum membrane (MAM). As to expression, ubiquitous. Highly expressed in kidney, liver, placenta and lung.

The protein resides in the endoplasmic reticulum membrane. The protein localises to the mitochondrion membrane. Its subcellular location is the secreted. The enzyme catalyses Catalyzes the rearrangement of -S-S- bonds in proteins.. In terms of biological role, thiredoxin domain-containing protein that participates in various redox reactions through the reversible oxidation of its active center dithiol to a disulfide and catalyze dithiol-disulfide exchange reactions. Acts as a key inhibitor of the alternative triglyceride biosynthesis pathway by inhibiting the activity of TMEM68/DIESL at the endoplasmic reticulum, thereby restricting accumulation of triacylglycerol. The alternative triglyceride biosynthesis pathway mediates formation of triacylglycerol from diacylglycerol and membrane phospholipids. Acts as a protein disulfide isomerase by catalyzing formation or reduction of disulfide bonds. Specifically mediates formation of disulfide bonds of transmembrane proteins at the endoplasmic reticulum membrane. Involved in endoplasmic reticulum-associated degradation (ERAD) via its protein disulfide isomerase activity by acting on folding-defective polypeptides at the endoplasmic reticulum membrane. Acts as a negative regulator of platelet aggregation following secretion in the extracellular space. Acts as a regulator of endoplasmic reticulum-mitochondria contact sites via its ability to regulate redox signals. Regulates endoplasmic reticulum-mitochondria Ca(2+) flux. In Homo sapiens (Human), this protein is Thioredoxin-related transmembrane protein 1.